We begin with the raw amino-acid sequence, 1655 residues long: Protein scribble homolog (1655 aa).

A sufficient for targeting to adherens junction and to inhibit cell proliferation region spans residues 1-818 (MLKCIPLWRC…MRVWRERMVE (818 aa)). Phosphoserine is present on Ser37. LRR repeat units lie at residues 37-58 (SLEE…FFRL), 60-81 (NLRK…VANF), 83-104 (QLVE…IKFC), 106-127 (ALEI…FTQL), 129-150 (SLAH…VGNL), 152-174 (NLVT…SFLV), 175-197 (KLEQ…GALP), 198-219 (NLRE…LGNL), 221-243 (RLVC…GGLV), 244-265 (LLTD…IGQL), 267-288 (QLSI…IGDC), 290-312 (NLSE…GKLT), 313-334 (KLTN…IGGC), 336-357 (ALSV…LAHT), 359-381 (ELHV…THLN), and 382-402 (LKAL…QTED). The residue at position 378 (Thr378) is a Phosphothreonine. 3 disordered regions span residues 417 to 440 (PQQP…WSDA), 459 to 606 (DAEE…IRKD), and 628 to 702 (LLQG…VSAP). Positions 458–474 (EDAEEAAAEKRGLQRRA) form a coiled coil. Residue Thr475 is modified to Phosphothreonine. Over residues 479 to 494 (SELKVMKRSIEGRRSE) the composition is skewed to basic and acidic residues. Residue Ser504 is modified to Phosphoserine. The span at 537-555 (EGPSAEAQGGSQQEATTAG) shows a compositional bias: low complexity. 2 stretches are compositionally biased toward acidic residues: residues 556-565 (GEEDAEEDYQ) and 660-694 (EEEE…EEDK). The stretch at 656 to 701 (RAQKEEEEEEEGSPQEEEEEEEEENRAEEEEASTEEEDKEGAVVSA) forms a coiled coil. At Ser688 the chain carries Phosphoserine. Thr689 carries the phosphothreonine modification. Residues Ser708 and Ser764 each carry the phosphoserine modification. Positions 717 to 1229 (IEPARIEEEE…SLESISSIDR (513 aa)) are interaction with ARHGEF7. Residues 728 to 815 (TLTILRQTGG…AVQMRVWRER (88 aa)) form the PDZ 1 domain. The interval 728-1194 (TLTILRQTGG…TVLVCDGFEA (467 aa)) is required for interaction with VIM. Thr826 carries the phosphothreonine modification. The interval 827–853 (PLRPEDDYSPRERRGGGLRLPLLPPES) is disordered. Positions 829 to 841 (RPEDDYSPRERRG) are enriched in basic and acidic residues. A phosphoserine mark is found at Ser835, Ser853, Ser875, and Ser939. PDZ domains follow at residues 862-950 (VACL…EREA), 1004-1093 (EIRL…RRDP), and 1100-1194 (ELCI…GFEA). Residues 1105–1117 (KAPGERLGISIRG) are interaction with tick-borne encephalitis virus RNA-directed RNA polymerase NS5. A phosphoserine mark is found at Ser1140, Ser1220, Ser1223, Ser1226, Ser1232, Ser1276, Ser1279, Ser1295, Ser1298, Ser1306, and Ser1309. Positions 1227–1242 (IDRELSPEGPGKEKEL) are enriched in basic and acidic residues. The tract at residues 1227 to 1246 (IDRELSPEGPGKEKELPGQT) is disordered. The disordered stretch occupies residues 1277–1489 (AGSVQRVPSG…APERALSPAE (213 aa)). Pro residues predominate over residues 1302–1311 (QQPPSPPSPD). A Phosphothreonine modification is found at Thr1342. Ser1348 carries the phosphoserine modification. A compositionally biased stretch (basic and acidic residues) spans 1353–1365 (SFRERQKYFELEV). Ser1378 is subject to Phosphoserine. Residues 1379–1419 (LVGADDLRKMQEEEARKLQQKRAQMLREAAEAGAEARLALD) are a coiled coil. Positions 1383-1395 (DDLRKMQEEEARK) are enriched in basic and acidic residues. A compositionally biased stretch (low complexity) spans 1409 to 1421 (EAGAEARLALDGE). Over residues 1422-1432 (TLGEEEQEDEQ) the composition is skewed to acidic residues. Phosphoserine occurs at positions 1437, 1445, and 1448. A compositionally biased stretch (basic and acidic residues) spans 1461–1472 (AKAERRHQERLR). Phosphoserine is present on residues Ser1475, Ser1486, and Ser1508. The tract at residues 1520 to 1568 (LSRSQEGRGTRGPLERLAEAPSPAPTPSPTPVEDLGPQTSTSPGRLPLS) is disordered. Residues 1524–1537 (QEGRGTRGPLERLA) are compositionally biased toward basic and acidic residues. Position 1541 is a phosphoserine (Ser1541). A Phosphothreonine modification is found at Thr1545. Ser1547, Ser1561, and Ser1591 each carry phosphoserine. Residues 1622-1655 (GRPSPGAVGPEDVALCSSRRPVRPGRRGLGPVPS) form a disordered region.

The protein belongs to the LAP (LRR and PDZ) protein family. In terms of assembly, interacts with UBE3A. Interacts with PAK1 and PAK2. Interacts (via PDZ domains) with VANGL2. Interacts (via PDZ domains) with LPP and TRIP6; the interaction is direct. Interacts (via PDZ domains) with TJP2. Interacts (via PDZ domains) with APC; may mediate APC targeting to adherens junctions of epithelial cells. Interacts (via PDZ domains) with TSHR; regulates TSHR trafficking and function. Interacts with ARHGEF7 and GIT1; interacts directly with ARHGEF7. Interacts with CTNNB1. Interacts with MAPK12. Interacts (via PDZ domains 1 and 3) with MCC. Interacts with DLG5. Interacts with STK4/MST1 and LATS1 in the presence of DLG5. Interacts (via PDZ domain 3) with CRTAM (via PDZ-binding motif); the interaction promotes CRTAM and SCRIB polarization in a subset of CD4+ T-cells. Interacts with YES1, when YES1 is in a closed conformation; the interaction facilitates YES1 autophosphorylation. Interacts (via PDZ domains) with VIM; the interaction protects SCRIB from proteasomal degradation and facilitates SCRIB localization to intermediate filaments, the interaction is reduced by cell contact inhibition. As to quaternary structure, (Microbial infection) Interacts (via fourth PDZ domain) with tick-borne encephalitis virus RNA-directed RNA polymerase NS5; this interaction targets viral NS5 to the cell membrane periphery and nucleus and prevents STAT1 phosphorylation, and thus, the activation of the JAK-STAT signaling pathway. Interacts with HPV E6. Interacts with influenza A virus protein NS1; the interaction results in the translocation of SCRIB from the cell membrane to perinuclear puncta. In terms of processing, ubiquitinated; targeted for UBE3A-dependent multiubiquitination in the presence of high-risk HPV E6 proteins and degraded. Post-translationally, palmitoylated. Could be depalmitoylated by LYPLA1 and/or LYPLA2. Palmitoylation of SCRIB by ZDHHC7 is required for its localization to cell-cell junctions, function in the establishement of epithelial cell polarity and the regulation of downstream signaling pathways important for epithelial cell differentiation. In terms of tissue distribution, expressed in kidney, skeletal muscles, liver, lung, breast, intestine, placenta and skin mainly in epithelial cells (at protein level).

The protein resides in the cell membrane. The protein localises to the cell junction. Its subcellular location is the adherens junction. It localises to the cell projection. It is found in the lamellipodium. The protein resides in the cytoplasm. The protein localises to the postsynapse. Its subcellular location is the presynapse. Functionally, scaffold protein involved in different aspects of polarized cell differentiation regulating epithelial and neuronal morphogenesis and T-cell polarization. Via its interaction with CRTAM, required for the late phase polarization of a subset of CD4+ T-cells, which in turn regulates TCR-mediated proliferation and IFNG and IL22 production. Plays a role in cell directional movement, cell orientation, cell sheet organization and Golgi complex polarization at the cell migration front. Promotes epithelial cell layer barrier function via maintaining cell-cell adhesion. Most probably functions in the establishment of apico-basal cell polarity. May function in cell proliferation regulating progression from G1 to S phase and as a positive regulator of apoptosis for instance during acinar morphogenesis of the mammary epithelium. May regulate cell invasion via MAPK-mediated cell migration and adhesion. May play a role in exocytosis and in the targeting of synaptic vesicles to synapses. Functions as an activator of Rac GTPase activity. The chain is Protein scribble homolog from Homo sapiens (Human).